A 463-amino-acid chain; its full sequence is Fibrinogen beta chain (463 aa).

The span at 1 to 12 shows a compositional bias: acidic residues; that stretch reads ASVEYDNEEDSP. The segment at 1 to 56 is disordered; it reads ASVEYDNEEDSPQIDARAHRPLDKRQEAAPTLRPVAPPISGTGYQPRPPKQDKQAM. Y5 carries the sulfotyrosine modification. Residues 16–27 are compositionally biased toward basic and acidic residues; that stretch reads ARAHRPLDKRQE. 2 cysteine pairs are disulfide-bonded: C205–C289 and C215–C244. In terms of domain architecture, Fibrinogen C-terminal spans 206–461; it reads NIPVVSGREC…KMSMKIKPYF (256 aa). Residue N367 is glycosylated (N-linked (GlcNAc...) asparagine). Ca(2+) is bound by residues D384, D386, and W388. The cysteines at positions 397 and 410 are disulfide-linked.

In terms of assembly, heterohexamer; disulfide linked. Contains 2 sets of 3 non-identical chains (alpha, beta and gamma). The 2 heterotrimers are in head to head conformation with the N-termini in a small central domain. Post-translationally, conversion of fibrinogen to fibrin is triggered by thrombin, which cleaves fibrinopeptides A and B from alpha and beta chains, and thus exposes the N-terminal polymerization sites responsible for the formation of the soft clot. The soft clot is converted into the hard clot by factor XIIIA which catalyzes the epsilon-(gamma-glutamyl)lysine cross-linking between gamma chains (stronger) and between alpha chains (weaker) of different monomers.

The protein localises to the secreted. Functionally, cleaved by the protease thrombin to yield monomers which, together with fibrinogen alpha (FGA) and fibrinogen gamma (FGG), polymerize to form an insoluble fibrin matrix. Fibrin has a major function in hemostasis as one of the primary components of blood clots. The sequence is that of Fibrinogen beta chain (FGB) from Gallus gallus (Chicken).